The primary structure comprises 88 residues: Small ribosomal subunit protein bS20 (88 aa).

The tract at residues 1 to 27 (MANIPSAKKRARQAEKRRKHNQSQRSM) is disordered. Basic residues predominate over residues 7-22 (AKKRARQAEKRRKHNQ).

The protein belongs to the bacterial ribosomal protein bS20 family.

Its function is as follows. Binds directly to 16S ribosomal RNA. This is Small ribosomal subunit protein bS20 from Alkalilimnicola ehrlichii (strain ATCC BAA-1101 / DSM 17681 / MLHE-1).